The sequence spans 204 residues: Guanylate kinase (204 aa).

A Guanylate kinase-like domain is found at 18-198 (GKLIIFSAPS…AKAETLEVIK (181 aa)). 25–32 (APSGSGKS) serves as a coordination point for ATP.

Belongs to the guanylate kinase family.

The protein resides in the cytoplasm. The catalysed reaction is GMP + ATP = GDP + ADP. Essential for recycling GMP and indirectly, cGMP. The polypeptide is Guanylate kinase (Bacteroides thetaiotaomicron (strain ATCC 29148 / DSM 2079 / JCM 5827 / CCUG 10774 / NCTC 10582 / VPI-5482 / E50)).